We begin with the raw amino-acid sequence, 417 residues long: Blood group Rh(D) polypeptide (417 aa).

11 consecutive transmembrane segments (helical) span residues 12–32 (CLPL…YFFT), 44–64 (LVAS…GLGF), 77–97 (VAFN…LDGF), 107–127 (VITL…LISV), 130–150 (VLGK…VTAL), 167–187 (MNMM…AWCL), 203–223 (TIPS…WPSF), 238–258 (VFNT…GSSL), 287–307 (LIPS…ISVG), 334–354 (LLGL…TVGA), and 358–378 (MIGF…VIAL).

Belongs to the ammonium transporter (TC 2.A.49) family. Rh subfamily. In terms of processing, palmitoylated. Restricted to tissues or cell lines expressing erythroid characters.

It localises to the cell membrane. May be part of an oligomeric complex which is likely to have a transport or channel function in the erythrocyte membrane. The polypeptide is Blood group Rh(D) polypeptide (RHD) (Homo sapiens (Human)).